A 337-amino-acid polypeptide reads, in one-letter code: Ribosomal RNA small subunit methyltransferase H (337 aa).

S-adenosyl-L-methionine contacts are provided by residues Gly-36–His-38, Asp-56, Phe-82, Asp-100, and Gln-107. The interval Leu-315–Gln-337 is disordered.

It belongs to the methyltransferase superfamily. RsmH family.

The protein resides in the cytoplasm. It carries out the reaction cytidine(1402) in 16S rRNA + S-adenosyl-L-methionine = N(4)-methylcytidine(1402) in 16S rRNA + S-adenosyl-L-homocysteine + H(+). Functionally, specifically methylates the N4 position of cytidine in position 1402 (C1402) of 16S rRNA. The sequence is that of Ribosomal RNA small subunit methyltransferase H from Xanthomonas euvesicatoria pv. vesicatoria (strain 85-10) (Xanthomonas campestris pv. vesicatoria).